Consider the following 122-residue polypeptide: Large ribosomal subunit protein uL14 (122 aa).

This sequence belongs to the universal ribosomal protein uL14 family. As to quaternary structure, part of the 50S ribosomal subunit. Forms a cluster with proteins L3 and L19. In the 70S ribosome, L14 and L19 interact and together make contacts with the 16S rRNA in bridges B5 and B8.

In terms of biological role, binds to 23S rRNA. Forms part of two intersubunit bridges in the 70S ribosome. This Streptococcus pneumoniae (strain JJA) protein is Large ribosomal subunit protein uL14.